Here is a 185-residue protein sequence, read N- to C-terminus: Elongation factor P (185 aa).

It belongs to the elongation factor P family.

Its subcellular location is the cytoplasm. It functions in the pathway protein biosynthesis; polypeptide chain elongation. Functionally, involved in peptide bond synthesis. Stimulates efficient translation and peptide-bond synthesis on native or reconstituted 70S ribosomes in vitro. Probably functions indirectly by altering the affinity of the ribosome for aminoacyl-tRNA, thus increasing their reactivity as acceptors for peptidyl transferase. This Caldicellulosiruptor saccharolyticus (strain ATCC 43494 / DSM 8903 / Tp8T 6331) protein is Elongation factor P.